Reading from the N-terminus, the 427-residue chain is 3-phosphoshikimate 1-carboxyvinyltransferase (427 aa).

Residues Lys-20, Ser-21, and Arg-25 each coordinate 3-phosphoshikimate. Residue Lys-20 participates in phosphoenolpyruvate binding. Residues Gly-92 and Arg-120 each coordinate phosphoenolpyruvate. 3-phosphoshikimate contacts are provided by Ser-166, Gln-168, Asp-312, and Lys-339. Gln-168 provides a ligand contact to phosphoenolpyruvate. Asp-312 serves as the catalytic Proton acceptor. Residues Arg-343 and Arg-385 each contribute to the phosphoenolpyruvate site.

Belongs to the EPSP synthase family. As to quaternary structure, monomer.

The protein localises to the cytoplasm. The enzyme catalyses 3-phosphoshikimate + phosphoenolpyruvate = 5-O-(1-carboxyvinyl)-3-phosphoshikimate + phosphate. Its pathway is metabolic intermediate biosynthesis; chorismate biosynthesis; chorismate from D-erythrose 4-phosphate and phosphoenolpyruvate: step 6/7. Functionally, catalyzes the transfer of the enolpyruvyl moiety of phosphoenolpyruvate (PEP) to the 5-hydroxyl of shikimate-3-phosphate (S3P) to produce enolpyruvyl shikimate-3-phosphate and inorganic phosphate. This Streptococcus uberis (strain ATCC BAA-854 / 0140J) protein is 3-phosphoshikimate 1-carboxyvinyltransferase.